Reading from the N-terminus, the 480-residue chain is Ribulose bisphosphate carboxylase large chain (480 aa).

Residues 1–2 (MS) constitute a propeptide that is removed on maturation. The residue at position 3 (Pro-3) is an N-acetylproline. Lys-14 carries the post-translational modification N6,N6,N6-trimethyllysine. 2 residues coordinate substrate: Asn-123 and Thr-173. The active-site Proton acceptor is Lys-175. Residue Lys-177 participates in substrate binding. Residues Lys-201, Asp-203, and Glu-204 each coordinate Mg(2+). An N6-carboxylysine modification is found at Lys-201. Catalysis depends on His-294, which acts as the Proton acceptor. Substrate-binding residues include Arg-295, His-327, and Ser-379.

The protein belongs to the RuBisCO large chain family. Type I subfamily. Heterohexadecamer of 8 large chains and 8 small chains; disulfide-linked. The disulfide link is formed within the large subunit homodimers. It depends on Mg(2+) as a cofactor. Post-translationally, the disulfide bond which can form in the large chain dimeric partners within the hexadecamer appears to be associated with oxidative stress and protein turnover.

It localises to the plastid. Its subcellular location is the chloroplast. The enzyme catalyses 2 (2R)-3-phosphoglycerate + 2 H(+) = D-ribulose 1,5-bisphosphate + CO2 + H2O. The catalysed reaction is D-ribulose 1,5-bisphosphate + O2 = 2-phosphoglycolate + (2R)-3-phosphoglycerate + 2 H(+). Functionally, ruBisCO catalyzes two reactions: the carboxylation of D-ribulose 1,5-bisphosphate, the primary event in carbon dioxide fixation, as well as the oxidative fragmentation of the pentose substrate in the photorespiration process. Both reactions occur simultaneously and in competition at the same active site. The sequence is that of Ribulose bisphosphate carboxylase large chain from Gossypium barbadense (Sea Island cotton).